A 377-amino-acid polypeptide reads, in one-letter code: 8-amino-7-oxononanoate synthase (377 aa).

R13 is a substrate binding site. Position 100–101 (100–101) interacts with pyridoxal 5'-phosphate; sequence GY. A substrate-binding site is contributed by H125. The pyridoxal 5'-phosphate site is built by S171, H199, and T228. K231 is modified (N6-(pyridoxal phosphate)lysine). Substrate is bound at residue T345.

The protein belongs to the class-II pyridoxal-phosphate-dependent aminotransferase family. BioF subfamily. Homodimer. Pyridoxal 5'-phosphate serves as cofactor.

The catalysed reaction is 6-carboxyhexanoyl-[ACP] + L-alanine + H(+) = (8S)-8-amino-7-oxononanoate + holo-[ACP] + CO2. Its pathway is cofactor biosynthesis; biotin biosynthesis. In terms of biological role, catalyzes the decarboxylative condensation of pimeloyl-[acyl-carrier protein] and L-alanine to produce 8-amino-7-oxononanoate (AON), [acyl-carrier protein], and carbon dioxide. The chain is 8-amino-7-oxononanoate synthase from Nitrosococcus oceani (strain ATCC 19707 / BCRC 17464 / JCM 30415 / NCIMB 11848 / C-107).